Reading from the N-terminus, the 190-residue chain is Protein PLANT CADMIUM RESISTANCE 8 (190 aa).

Positions Met1–Pro31 are disordered. The segment covering Asn13–Thr28 has biased composition (polar residues). Thr23 carries the post-translational modification Phosphothreonine. Residues Leu94–Gly113 form a helical membrane-spanning segment.

It belongs to the cornifelin family.

The protein localises to the cell membrane. Functionally, may be involved in heavy metals transport. The polypeptide is Protein PLANT CADMIUM RESISTANCE 8 (PCR8) (Arabidopsis thaliana (Mouse-ear cress)).